The following is a 138-amino-acid chain: Large ribosomal subunit protein eL14B (138 aa).

N-acetylserine is present on Ser2.

It belongs to the eukaryotic ribosomal protein eL14 family. As to quaternary structure, component of the large ribosomal subunit (LSU). Mature yeast ribosomes consist of a small (40S) and a large (60S) subunit. The 40S small subunit contains 1 molecule of ribosomal RNA (18S rRNA) and 33 different proteins (encoded by 57 genes). The large 60S subunit contains 3 rRNA molecules (25S, 5.8S and 5S rRNA) and 46 different proteins (encoded by 81 genes). N-terminally acetylated by acetyltransferase NatA.

The protein localises to the cytoplasm. In terms of biological role, component of the ribosome, a large ribonucleoprotein complex responsible for the synthesis of proteins in the cell. The small ribosomal subunit (SSU) binds messenger RNAs (mRNAs) and translates the encoded message by selecting cognate aminoacyl-transfer RNA (tRNA) molecules. The large subunit (LSU) contains the ribosomal catalytic site termed the peptidyl transferase center (PTC), which catalyzes the formation of peptide bonds, thereby polymerizing the amino acids delivered by tRNAs into a polypeptide chain. The nascent polypeptides leave the ribosome through a tunnel in the LSU and interact with protein factors that function in enzymatic processing, targeting, and the membrane insertion of nascent chains at the exit of the ribosomal tunnel. In Saccharomyces cerevisiae (strain ATCC 204508 / S288c) (Baker's yeast), this protein is Large ribosomal subunit protein eL14B.